The sequence spans 235 residues: Purine nucleoside phosphorylase DeoD-type (235 aa).

H4 provides a ligand contact to a purine D-ribonucleoside. Phosphate is bound by residues G20, R24, R43, and 87–90 (RVGT). Residues 179–181 (EME) and 203–204 (SN) contribute to the a purine D-ribonucleoside site.

The protein belongs to the PNP/UDP phosphorylase family. In terms of assembly, homohexamer; trimer of homodimers.

It carries out the reaction a purine D-ribonucleoside + phosphate = a purine nucleobase + alpha-D-ribose 1-phosphate. The catalysed reaction is a purine 2'-deoxy-D-ribonucleoside + phosphate = a purine nucleobase + 2-deoxy-alpha-D-ribose 1-phosphate. In terms of biological role, catalyzes the reversible phosphorolytic breakdown of the N-glycosidic bond in the beta-(deoxy)ribonucleoside molecules, with the formation of the corresponding free purine bases and pentose-1-phosphate. This Levilactobacillus brevis (strain ATCC 367 / BCRC 12310 / CIP 105137 / JCM 1170 / LMG 11437 / NCIMB 947 / NCTC 947) (Lactobacillus brevis) protein is Purine nucleoside phosphorylase DeoD-type.